The sequence spans 365 residues: Methylthioribose-1-phosphate isomerase (365 aa).

D255 acts as the Proton donor in catalysis.

It belongs to the eIF-2B alpha/beta/delta subunits family. MtnA subfamily.

It is found in the cytoplasm. The protein localises to the nucleus. It catalyses the reaction 5-(methylsulfanyl)-alpha-D-ribose 1-phosphate = 5-(methylsulfanyl)-D-ribulose 1-phosphate. It functions in the pathway amino-acid biosynthesis; L-methionine biosynthesis via salvage pathway; L-methionine from S-methyl-5-thio-alpha-D-ribose 1-phosphate: step 1/6. Catalyzes the interconversion of methylthioribose-1-phosphate (MTR-1-P) into methylthioribulose-1-phosphate (MTRu-1-P). In Drosophila willistoni (Fruit fly), this protein is Methylthioribose-1-phosphate isomerase.